The primary structure comprises 567 residues: Dihydroxy-acid dehydratase 1 (567 aa).

C57 provides a ligand contact to [2Fe-2S] cluster. D89 serves as a coordination point for Mg(2+). C130 serves as a coordination point for [2Fe-2S] cluster. Residues D131 and K132 each coordinate Mg(2+). Position 132 is an N6-carboxylysine (K132). C202 provides a ligand contact to [2Fe-2S] cluster. Mg(2+) is bound at residue E454. Catalysis depends on S480, which acts as the Proton acceptor.

The protein belongs to the IlvD/Edd family. Homodimer. [2Fe-2S] cluster is required as a cofactor. The cofactor is Mg(2+).

The enzyme catalyses (2R)-2,3-dihydroxy-3-methylbutanoate = 3-methyl-2-oxobutanoate + H2O. It carries out the reaction (2R,3R)-2,3-dihydroxy-3-methylpentanoate = (S)-3-methyl-2-oxopentanoate + H2O. The protein operates within amino-acid biosynthesis; L-isoleucine biosynthesis; L-isoleucine from 2-oxobutanoate: step 3/4. Its pathway is amino-acid biosynthesis; L-valine biosynthesis; L-valine from pyruvate: step 3/4. In terms of biological role, functions in the biosynthesis of branched-chain amino acids. Catalyzes the dehydration of (2R,3R)-2,3-dihydroxy-3-methylpentanoate (2,3-dihydroxy-3-methylvalerate) into 2-oxo-3-methylpentanoate (2-oxo-3-methylvalerate) and of (2R)-2,3-dihydroxy-3-methylbutanoate (2,3-dihydroxyisovalerate) into 2-oxo-3-methylbutanoate (2-oxoisovalerate), the penultimate precursor to L-isoleucine and L-valine, respectively. This chain is Dihydroxy-acid dehydratase 1, found in Aromatoleum aromaticum (strain DSM 19018 / LMG 30748 / EbN1) (Azoarcus sp. (strain EbN1)).